We begin with the raw amino-acid sequence, 164 residues long: UPF0114 protein KPK_0696 (164 aa).

Transmembrane regions (helical) follow at residues 15–35 (LLAP…IKFF), 53–73 (LILT…LVMV), 109–126 (VAAS…RVFM), and 136–156 (LMWY…MGYL).

The protein belongs to the UPF0114 family.

It is found in the cell membrane. This Klebsiella pneumoniae (strain 342) protein is UPF0114 protein KPK_0696.